A 128-amino-acid polypeptide reads, in one-letter code: ADA histone acetyltransferase complex component 2 (128 aa).

It is found in the cytoplasm. The protein localises to the nucleus. In Saccharomyces cerevisiae (strain ATCC 204508 / S288c) (Baker's yeast), this protein is ADA histone acetyltransferase complex component 2 (AHC2).